A 124-amino-acid polypeptide reads, in one-letter code: Small ribosomal subunit protein uS12 (124 aa).

The interval 1-24 (MPTISQLVRKGRAKITKKSKSAAL) is disordered. The segment covering 9 to 20 (RKGRAKITKKSK) has biased composition (basic residues). Position 89 is a 3-methylthioaspartic acid (aspartate 89). A disordered region spans residues 105 to 124 (AGVEGRTQRRSKYGAKRPKK). Residues 112–124 (QRRSKYGAKRPKK) are compositionally biased toward basic residues.

The protein belongs to the universal ribosomal protein uS12 family. Part of the 30S ribosomal subunit. Contacts proteins S8 and S17. May interact with IF1 in the 30S initiation complex.

With S4 and S5 plays an important role in translational accuracy. Its function is as follows. Interacts with and stabilizes bases of the 16S rRNA that are involved in tRNA selection in the A site and with the mRNA backbone. Located at the interface of the 30S and 50S subunits, it traverses the body of the 30S subunit contacting proteins on the other side and probably holding the rRNA structure together. The combined cluster of proteins S8, S12 and S17 appears to hold together the shoulder and platform of the 30S subunit. The polypeptide is Small ribosomal subunit protein uS12 (Christiangramia forsetii (strain DSM 17595 / CGMCC 1.15422 / KT0803) (Gramella forsetii)).